A 717-amino-acid chain; its full sequence is MLVHLFRFGIRGGPVPGWSLQSLRFQTFSAARSSDDRLSSHLLRTVAQLRVQLRAHLPRAPPASHWSPSAWCWVGGTLVVPAVLWQHPRLCLIALCEAKESPPAQPTRAPELRFNWKLFWHFLHPHLLALGAAIVLALGAALVNVQIPLLLGQLVEIVAKYTRDHMGSFVSESRKLSVQLLLLYGVQGLLTFGYLVLLSHIGERMAMDMRKALFSSLLRQDIAFFDAKKTGQLVSRLTTDVQEFKSSFKLVISQGLRSCTQVIGSLVSLSMLSPRLTLMLAVVTPALMGVGTLMGSGLRKLSRQCQEQIARATGVADEALGNVRTVRAFAMEKREEERYQAELESCCCKAEELGRGIALFQGLSNIAFNCMVLGTLFIGGSLVAGQQLKGGDLMSFLVASQTVQRSMASLSVLFGQVVRGLSAGARVFEYMALSPVIPLTGGYCIPNKDIRGSITFQNVTFSYPCRPGFNVLKDFTLKLPSGKIVALVGQSGGGKTTVASLLERFYDPEAGSVTLDGHDLRTLNPSWLRGQVIGFISQEPVLFATTIMENIRFGKLDASDEEVYTAAREANAHEFISSFPDGYSTVVGERGTTLSGGQKQRLAIARALIKQPTVLILDEATSALDAESERVVQEALDRASAGRTVLVIAHRLSTVRAAHSIIVMANGQVCEAGTHEELLKKGGLYSELIRRQTLDASLTSTPPAEKPEDPKSCQSKA.

Residues 1 to 25 constitute a mitochondrion transit peptide; the sequence is MLVHLFRFGIRGGPVPGWSLQSLRF. 4 helical membrane-spanning segments follow: residues 127–147, 178–198, 278–298, and 365–385; these read LLAL…NVQI, VQLL…LVLL, LMLA…GSGL, and NIAF…LVAG. The region spanning 132–419 is the ABC transmembrane type-1 domain; the sequence is AAIVLALGAA…LSVLFGQVVR (288 aa). The 238-residue stretch at 454-691 folds into the ABC transporter domain; it reads ITFQNVTFSY…GGLYSELIRR (238 aa). 489 to 496 contributes to the ATP binding site; the sequence is GQSGGGKT. Residues 695–717 form a disordered region; it reads DASLTSTPPAEKPEDPKSCQSKA.

This sequence belongs to the ABC transporter superfamily. ABCB family. Multidrug resistance exporter (TC 3.A.1.201) subfamily. The mitochondrial potassium channel (mitoK(ATP)) is composed of 4 subunits of CCDC51/MITOK and 4 subunits of ABCB8/MITOSUR. Interacts with PAAT. Interacts with NRP1; NRP1 regulates ABCB8/MITOSUR protein levels in mitochondria.

The protein resides in the mitochondrion inner membrane. Channel activity inhibited by ATP via ABCB8/MITOSUR subunit. In terms of biological role, ATP-binding subunit of the mitochondrial ATP-gated potassium channel (mitoK(ATP)). Together with pore-forming subunit CCDC51/MITOK of the mitoK(ATP) channel, mediates ATP-dependent potassium currents across the mitochondrial inner membrane. An increase in ATP intracellular levels closes the channel, inhibiting K(+) transport, whereas a decrease in ATP levels enhances K(+) uptake in the mitochondrial matrix. Plays a role in mitochondrial iron transport. Required for maintenance of normal cardiac function, possibly by influencing mitochondrial iron export and regulating the maturation of cytosolic iron sulfur cluster-containing enzymes. This chain is Mitochondrial potassium channel ATP-binding subunit, found in Mus musculus (Mouse).